The following is a 391-amino-acid chain: Acetyl-CoA acetyltransferase (391 aa).

Catalysis depends on Cys88, which acts as the Acyl-thioester intermediate. Residues His347 and Cys377 each act as proton acceptor in the active site.

The protein belongs to the thiolase-like superfamily. Thiolase family. As to quaternary structure, homotetramer.

The protein localises to the cytoplasm. The catalysed reaction is 2 acetyl-CoA = acetoacetyl-CoA + CoA. It functions in the pathway metabolic intermediate biosynthesis; (R)-mevalonate biosynthesis; (R)-mevalonate from acetyl-CoA: step 1/3. The chain is Acetyl-CoA acetyltransferase (phaA) from Paracoccus denitrificans.